The following is a 440-amino-acid chain: MKKAGIIHLGCSKNQVDTEILMGFLKELGYTFTPYLGEADLVLVNTCAFIKPAWQEAEENINFLKEYKENNKNLKIVVTGCYVERFEKELEDRYPFVDLFIGPGEYDKFVSLITSNGERKIHSSPASSFMYTHKMPRVLISPNFWVYVKISEGCNNFCSYCTIPFIRGRLRSRSIDDIIKEVEILVQKGVKEINLIAQDTTRYGEDLYGKSALVDLLKSIENIKGDFYVRILYSYPSRVTKDLINFIKVSEKVVPYFDIPIQHVNDEILKKMNRSYKKDDIIRVWSTIRENFEDAVIRTTVMVGFPGETEENFEELIAFIKAYPFDRLGAFTYYNEEGTISKNFDGQIDEDEKIRRYDILMSTQKEISKKLNAKLLGREFDVIIENEKGKYFIGRSWREAPEVDGVIMIPKEGSRSISIGDRVRVKIKKYRAYDLLGELV.

In terms of domain architecture, MTTase N-terminal spans Lys-2–Glu-118. Cys-11, Cys-47, Cys-81, Cys-154, Cys-158, and Cys-161 together coordinate [4Fe-4S] cluster. One can recognise a Radical SAM core domain in the interval Ile-140–Lys-370. The TRAM domain occupies Ala-373–Val-440.

This sequence belongs to the methylthiotransferase family. RimO subfamily. [4Fe-4S] cluster is required as a cofactor.

The protein localises to the cytoplasm. It catalyses the reaction L-aspartate(89)-[ribosomal protein uS12]-hydrogen + (sulfur carrier)-SH + AH2 + 2 S-adenosyl-L-methionine = 3-methylsulfanyl-L-aspartate(89)-[ribosomal protein uS12]-hydrogen + (sulfur carrier)-H + 5'-deoxyadenosine + L-methionine + A + S-adenosyl-L-homocysteine + 2 H(+). Its function is as follows. Catalyzes the methylthiolation of an aspartic acid residue of ribosomal protein uS12. The polypeptide is Ribosomal protein uS12 methylthiotransferase RimO (Dictyoglomus thermophilum (strain ATCC 35947 / DSM 3960 / H-6-12)).